Here is a 101-residue protein sequence, read N- to C-terminus: Small ribosomal subunit protein uS14 (101 aa).

This sequence belongs to the universal ribosomal protein uS14 family. Part of the 30S ribosomal subunit. Contacts proteins S3 and S10.

Functionally, binds 16S rRNA, required for the assembly of 30S particles and may also be responsible for determining the conformation of the 16S rRNA at the A site. This is Small ribosomal subunit protein uS14 from Methylococcus capsulatus (strain ATCC 33009 / NCIMB 11132 / Bath).